A 140-amino-acid chain; its full sequence is uncharacterized protein (140 aa).

The next 3 membrane-spanning stretches (helical) occupy residues isoleucine 20–glycine 42, phenylalanine 88–leucine 110, and isoleucine 115–glutamine 137.

The protein resides in the cell membrane. This is an uncharacterized protein from Archaeoglobus fulgidus (strain ATCC 49558 / DSM 4304 / JCM 9628 / NBRC 100126 / VC-16).